We begin with the raw amino-acid sequence, 710 residues long: MRYIVSPQLVLQVGKGQEVERALYLTPYDYIDEKSPIYYFLRSHLNIQQPEIVKRHILLTLRMTQLKGYLGNLLDIKDDIIIYSHKNNLEYSYVDNTIFNPFVYTQKKTLLKNDSFLYNVYPGACDFLVIWVARACDTSIPEFGSYEDVDNNIIKFETMLMDVFPQLDLDITVESKFNNIFRTNLKLTGLKKIIQRVQDLDINYKSLLSRYDEHFINMTGNHFILNDEQLNLSIWDLDGTLALSSDGDTVMINNVKLFTDLVSDIDTQMERIKGDITYKVHLATPINSRIKLDIETSFIFIETATNNILLSSDKKISIILAKNHISIKVKNHIPNIEKYFTFLVIAINAMFNSVQKSADFTKVETVYWSRICQNTKNKNRKPVIINYLDPGMKKISNNFYRSDEKEVFINDNDIMFTCMDPLGKYNKVGFLNIFHDMRKYCIPCCFLHDQSHRSTFSSCVHQIDVEKKIVSPYILNFGKVVTESKMSFLPIIFDAFLNDGMTANMEQDNKRLKETSGYHIVRCCTGNDIVRLRTTSNIIQFVNEDKNILIVNDMVYFPMNASDIGKKIHILIQEIVHEVMIVKKKESSDKIDFFPPNYKLLKDLFPKQTIQTPIQSDAGMVLTTDGFYIDGKLFNEDLSSKYVTFTKNVITSDAVAKYFSPLFKYVISEAKDRFIKTWMINIMIHMNVDPNNIIPTLEKYYPNFGRVQIN.

Belongs to the poxviridae VETF large subunit family. In terms of assembly, heterodimer of a 70 kDa and a 82 kDa subunit. Part of the early transcription complex composed of ETF, RAP94/OPG109, and the DNA-directed RNA polymerase.

It localises to the virion. Its function is as follows. Acts with RNA polymerase to initiate transcription from early gene promoters. Is recruited by the RPO-associated protein of 94 kDa RAP94/OPG109 to form the early transcription complex, which also contains the core RNA polymerase. ETF heterodimer binds to early gene promoters. In Variola virus (isolate Human/India/Ind3/1967) (VARV), this protein is Early transcription factor 82 kDa subunit (OPG133).